Here is a 453-residue protein sequence, read N- to C-terminus: Na(+)/H(+) antiporter NhaA 2 (453 aa).

A run of 12 helical transmembrane segments spans residues 23 to 43 (FLHI…AALI), 74 to 94 (LHFW…GMEI), 111 to 131 (LPMA…LSFG), 139 to 159 (GWAV…ALLG), 168 to 188 (VFLL…IAFF), 191 to 211 (GGLD…VIGL), 214 to 234 (IGVG…LGIL), 235 to 255 (LTGA…PVTA), 316 to 336 (VAFG…LSGV), 345 to 365 (WVMI…IVSV), 386 to 406 (IVLV…IANL), and 419 to 439 (LGVL…GVWS).

Belongs to the NhaA Na(+)/H(+) (TC 2.A.33) antiporter family.

Its subcellular location is the cell inner membrane. The enzyme catalyses Na(+)(in) + 2 H(+)(out) = Na(+)(out) + 2 H(+)(in). Functionally, na(+)/H(+) antiporter that extrudes sodium in exchange for external protons. In Pseudomonas putida (strain ATCC 700007 / DSM 6899 / JCM 31910 / BCRC 17059 / LMG 24140 / F1), this protein is Na(+)/H(+) antiporter NhaA 2.